Reading from the N-terminus, the 141-residue chain is Large ribosomal subunit protein uL11 (141 aa).

It belongs to the universal ribosomal protein uL11 family. As to quaternary structure, part of the ribosomal stalk of the 50S ribosomal subunit. Interacts with L10 and the large rRNA to form the base of the stalk. L10 forms an elongated spine to which L12 dimers bind in a sequential fashion forming a multimeric L10(L12)X complex. In terms of processing, one or more lysine residues are methylated.

Functionally, forms part of the ribosomal stalk which helps the ribosome interact with GTP-bound translation factors. The protein is Large ribosomal subunit protein uL11 of Pediococcus pentosaceus (strain ATCC 25745 / CCUG 21536 / LMG 10740 / 183-1w).